The following is an 872-amino-acid chain: MKTMTSAEVRQMFLDFFKSKGHTVEPSQSLVPVNDPTLLWINSGVATLKKYFDGSVVPENPRLTNAQKAIRTNDIENVGKTARHHTMFEMLGNFSIGDYFRNEAIAFAWELLTSSEWFEFPAEKLYITYYPADKDTYNRWVEVGVDPTHLVPIEDNFWEIGAGPSGPDTEIFFDRGEIYDPEHVGLKLLAEDIENDRYIEIWNIVLSQFNANPAIPRSEYPELPQKNIDTGMGLERMVCIIQGGKTNFDTDLFLPIIREIEKLSGKTYSPDSENMSFKVIADHIRSLSFAIGDGALPGNEGRGYVLRRLLRRAVMHGKKLGIQGKFLASLVPTVGKIMQSYYPEVLEKEDFIMQIIDREEETFNRTIDAGQKLIDELLVNLKAEGKDRIEGADIFRLYDTYGFPVELTEELAEDEGFKIEHEGFKVAMKAQQDRARAAVVKGGSMGAQNETLSSIEVDSKFLYEDKKAQAKLLVAIKDDELVDEVTGKAQLVFDVTPFYAEMGGQVADHGVIKNADGQVVATVLDVQHAPHGQNLHSVETISPLKVGETYTLEIDEERRSAVVKNHTATHLLHAALHNIVGNHALQAGSLNEVEFLRFDFTHFAQVSKEELAEIERQVNEVIWQSLKVETIETYIATAKEMGAMALFGEKYGKNVRVVKIGDYSIELCGGTHTQTTSEIGLFKIIKEEGIGSGVRRIIAVTGQKAYEAFKDAENTLSEVAGLVKAPQASQIVAKVSNLQDELKAAQKENDALAGKLAASQSDEIFKNVQRAGSVSFIASQVTVPDAKGLRNLADIWKQKELSDILVLVATIGEKVSLLVASKSLDVKAGNLVKELAPFVDGRGGGKPDMAMAGGSNAAGIPELLTAVAEKLG.

The Zn(2+) site is built by H566, H570, C668, and H672.

Belongs to the class-II aminoacyl-tRNA synthetase family. It depends on Zn(2+) as a cofactor.

It is found in the cytoplasm. It carries out the reaction tRNA(Ala) + L-alanine + ATP = L-alanyl-tRNA(Ala) + AMP + diphosphate. In terms of biological role, catalyzes the attachment of alanine to tRNA(Ala) in a two-step reaction: alanine is first activated by ATP to form Ala-AMP and then transferred to the acceptor end of tRNA(Ala). Also edits incorrectly charged Ser-tRNA(Ala) and Gly-tRNA(Ala) via its editing domain. The sequence is that of Alanine--tRNA ligase from Lactococcus lactis subsp. cremoris (strain MG1363).